Here is a 149-residue protein sequence, read N- to C-terminus: Large ribosomal subunit protein uL24 (149 aa).

The protein belongs to the universal ribosomal protein uL24 family. As to quaternary structure, part of the 50S ribosomal subunit.

Its function is as follows. One of two assembly initiator proteins, it binds directly to the 5'-end of the 23S rRNA, where it nucleates assembly of the 50S subunit. One of the proteins that surrounds the polypeptide exit tunnel on the outside of the subunit. This Nostoc sp. (strain PCC 7120 / SAG 25.82 / UTEX 2576) protein is Large ribosomal subunit protein uL24.